A 919-amino-acid polypeptide reads, in one-letter code: Translocase of chloroplast 101, chloroplastic (919 aa).

2 disordered regions span residues 20–47 and 64–211; these read SASR…VIEG and VDDE…NETR. The segment covering 73–88 has biased composition (basic and acidic residues); sequence SENKAVVETEKVESKP. Positions 96-128 are enriched in acidic residues; sequence FAEEDGDSDADAEDEDDEDDEDDDEDDDDEDDK. A compositionally biased stretch (polar residues) spans 182 to 207; sequence QRPNGAPSTQLTATTEENANSDTAEG. An AIG1-type G domain is found at 284 to 513; the sequence is DFACTILVLG…KLQETATPGR (230 aa). Residues 293–300 are G1; the sequence is GKTGVGKS. 296-301 contributes to the GTP binding site; sequence GVGKSA. Ser300 provides a ligand contact to Mg(2+). Residues 319 to 323 are G2; the sequence is PSTNK. A G3 region spans residues 340 to 343; sequence DTPG. Residues 412 to 415 are G4; that stretch reads THAS. GTP is bound by residues His413 and 461 to 462; that span reads EN. The G5 stretch occupies residues 461 to 463; sequence ENH. Disordered stretches follow at residues 540–585 and 611–650; these read LPDE…LTKE and RRRK…PMPD. Positions 543–567 are enriched in acidic residues; that stretch reads EQLDESDESDDDEEEEDSEADDYDE. Over residues 574-585 the composition is skewed to basic and acidic residues; sequence LSKEELEELTKE. Residues 629-638 show a composition bias toward acidic residues; sequence AQPDEADDEA. Positions 641–650 are enriched in low complexity; that stretch reads PAAVPVPMPD. Residues 893 to 914 form a helical membrane-spanning segment; it reads MVLIGIVPILRSLINCRFGFGG.

The protein belongs to the TRAFAC class TrmE-Era-EngA-EngB-Septin-like GTPase superfamily. AIG1/Toc34/Toc159-like paraseptin GTPase family. TOC159 subfamily. Part of the TOC core complex. The cofactor is Mg(2+).

It is found in the plastid. The protein localises to the chloroplast outer membrane. Functionally, GTPase involved in protein precursor import into chloroplasts. Seems to recognize chloroplast-destined precursor proteins and regulate their presentation to the translocation channel through GTP hydrolysis. Probably specialized in the import of nuclear encoded non-photosynthetic preproteins from the cytoplasm to the chloroplast. The protein is Translocase of chloroplast 101, chloroplastic of Physcomitrium patens (Spreading-leaved earth moss).